Reading from the N-terminus, the 124-residue chain is Large ribosomal subunit protein bL21 (124 aa).

This sequence belongs to the bacterial ribosomal protein bL21 family. As to quaternary structure, part of the 50S ribosomal subunit. Contacts protein L20.

This protein binds to 23S rRNA in the presence of protein L20. The chain is Large ribosomal subunit protein bL21 from Sinorhizobium medicae (strain WSM419) (Ensifer medicae).